Reading from the N-terminus, the 433-residue chain is Monodehydroascorbate reductase (433 aa).

FAD-binding positions include 12 to 15 (GGVS), Glu-39, Arg-46, Lys-51, Ile-94, and 145 to 146 (RE). NAD(+)-binding positions include 170-176 (GGYIGLE), Glu-194, Arg-200, and Gly-259. Position 172–176 (172–176 (YIGLE)) interacts with NADP(+). NADP(+) contacts are provided by Arg-200 and Gly-259. Asp-296 provides a ligand contact to FAD. 312 to 313 (EH) provides a ligand contact to NAD(+). 312-313 (EH) provides a ligand contact to NADP(+). Position 314 (Val-314) interacts with FAD. Residue Arg-318 coordinates L-ascorbate. Tyr-347 contributes to the FAD binding site. Tyr-347 serves as a coordination point for NAD(+). An NADP(+)-binding site is contributed by Tyr-347. Arg-349 contributes to the L-ascorbate binding site.

Belongs to the FAD-dependent oxidoreductase family. FAD is required as a cofactor. In terms of tissue distribution, expressed at relatively low levels in all tissues examined.

Its subcellular location is the cytoplasm. The catalysed reaction is 2 monodehydro-L-ascorbate radical + NADH + H(+) = 2 L-ascorbate + NAD(+). Functionally, catalyzes the conversion of monodehydroascorbate to ascorbate, oxidizing NADH in the process. This is Monodehydroascorbate reductase from Pisum sativum (Garden pea).